Reading from the N-terminus, the 1479-residue chain is MEANEESLKGKIEKLEGKEVIVESKEDEMDIIIEENREAEQEVMEVKARDGRGEQNDVLMEENNNQGEQKDEEMQDASSRSESSDFNSDEDEQILSRRDDELDLEKPLSEEEIDELISDLLAVESKAAEAQEALEKESLSKVESEVREELAQALRGDELDEAVAAEMMTFKDEWEATLDELETESATLLEQLDGAGIELPKLYEMIESQAPNGCYTEAWKQRAHWVGTQVTKETVESLANAERFLHTHRPVRKRHGKLLEEGASGFLEKKLADGAVKESLAGTSELDWSSLNKVFSEKRDESVSFGSKQWASVYLASTPHQAAAMGLEFPGVNEVEEIEEIDASLADPFLADAIDNERELALTEEQKTNYIRVKEEDDITCDRVLQLRLKRKRRKKRSKQVIRCAAENMDDDSVYLDGNNTTPNFAKDQVKSPETSTQVHNSEVNIEENGNFSNSDVDKMTPSTHINVDAKRDDSQNPANNFRCTACNKVAVEVHSHPLLEVIVCMDCKRSIEDRVSKVDDSLERHCEWCGHIADLIDCRTCEKLFCASCIKRNIGEEYMSEAQSSGWDCCCCSPIPLQRLTLELEKAMRDKKSIELSSDSSSDSSSDNNSVDTDADVNVTISSKKKSKKKIRRIIDDAELGKDTRTKIAIEKARQERLRSLQFSARYKTISSMGDVKSIPEGAEVEVLGDAHSGYIVNVVREIGEEAVRVPRSISAKLKVHQVTGIRFMWENIIQSISRVKSGDKGLGCILAHTMGLGKTFQVIAFLYTAMRCVDLGLKTALIVTPVNVLHNWRSEFEKWMPSEVKPLRIFMLGDVSRERRFDLLTKWRKKGGVFLMGYTNFRNLSLGRGVKDLNAARGICNALRDGPDILVCDEAHIIKNTKADTTQALKQVKCQRRIALTGSPLQNNLMEYYCMVDFVREGFLGSSPEFRNRFQNPIENGQHMNSTAEDVKIMNQRSHILYEQLKGFVQRMDMNVVKKDLPPKTVFVISVKLSPLQRILYQRFLELYGFSDGRTDERMRKNFFAAYQVLAQILNHPGIPQLRSEDSKNGRRGSIVDIPDDCSSDENIDYNMVTGEKQRTMNDLQDKVDGYLQKDWWVDLLQKNNYKVSDFSGKMILLLDILSMSADVGDKALVFSQSIPTLDLIELYLSRVPRHGKQGKFWKKGKDWYRIDGKTESSERQKLVDRFNEPDNKRVKCTLISTRAGSLGINLYAANRVIIVDGSWNPTYDLQAIFRAWRYGQKKPVFAYRLMARGTIEEKIYKRQVTKEGLAARVVDRQQVHRTISKEEMLHLFEFDDDDEKSEAVTEISKQNEAGHSNLVEQAILWTKKATLSRVGGDKLMENLLQRHGPNWISSFHEHETLLQENEEERLTKEEKDMAWEVYRRALEWEEVQRVPFSESPVVPKPSPSTQTEPLPQPKGFNRSRFVNRNCTRIAHQLTLISQGLKVGSSTVCGECGRVIRWEDVIPASKLSAVIVN.

The stretch at 19 to 49 forms a coiled coil; sequence EVIVESKEDEMDIIIEENREAEQEVMEVKAR. Positions 40-55 are enriched in basic and acidic residues; the sequence is EQEVMEVKARDGRGEQ. The tract at residues 40 to 109 is disordered; it reads EQEVMEVKAR…DELDLEKPLS (70 aa). Over residues 76–86 the composition is skewed to low complexity; the sequence is DASSRSESSDF. Positions 94 to 109 are enriched in basic and acidic residues; the sequence is ILSRRDDELDLEKPLS. The stretch at 109 to 199 forms a coiled coil; sequence SEEEIDELIS…EQLDGAGIEL (91 aa). The ADD domain occupies 472-601; that stretch reads RDDSQNPANN…KKSIELSSDS (130 aa). Residues 483 to 514 form a GATA-type; atypical zinc finger; the sequence is RCTACNKVAVEVHSHPLLEVIVCMDCKRSIED. Residues 524-577 form a PHD-type; atypical zinc finger; the sequence is ERHCEWCGHIADLIDCRTCEKLFCASCIKRNIGEEYMSEAQSSGWDCCCCSPIP. Residues 578 to 598 adopt a coiled-coil conformation; the sequence is LQRLTLELEKAMRDKKSIELS. The tract at residues 594–615 is disordered; that stretch reads SIELSSDSSSDSSSDNNSVDTD. Low complexity predominate over residues 598-615; the sequence is SSDSSSDSSSDNNSVDTD. The 184-residue stretch at 741–924 folds into the Helicase ATP-binding domain; that stretch reads VKSGDKGLGC…YCMVDFVREG (184 aa). 754-761 is a binding site for ATP; it reads HTMGLGKT. The DEAH box motif lies at 875–878; it reads DEAH. One can recognise a Helicase C-terminal domain in the interval 1122–1290; that stretch reads DILSMSADVG…QVHRTISKEE (169 aa). The segment at 1400–1423 is disordered; that stretch reads SESPVVPKPSPSTQTEPLPQPKGF.

This sequence belongs to the SNF2/RAD54 helicase family.

Its subcellular location is the nucleus. It is found in the chromosome. The protein localises to the telomere. Involved in transcriptional regulation and chromatin remodeling. Facilitates DNA replication in multiple cellular environments and is required for efficient replication of a subset of genomic loci. Binds to DNA tandem repeat sequences in both telomeres and euchromatin and in vitro binds DNA quadruplex structures. May help stabilizing G-rich regions into regular chromatin structures by remodeling G4 DNA and incorporating H3.3-containing nucleosomes. Involved in DNA repair of gamma-irradiation-mediated damages. The chain is Protein CHROMATIN REMODELING 20 from Arabidopsis thaliana (Mouse-ear cress).